We begin with the raw amino-acid sequence, 213 residues long: GTP cyclohydrolase 1 (213 aa).

Residues cysteine 104, histidine 107, and cysteine 175 each coordinate Zn(2+).

The protein belongs to the GTP cyclohydrolase I family. Homomer.

It carries out the reaction GTP + H2O = 7,8-dihydroneopterin 3'-triphosphate + formate + H(+). The protein operates within cofactor biosynthesis; 7,8-dihydroneopterin triphosphate biosynthesis; 7,8-dihydroneopterin triphosphate from GTP: step 1/1. The protein is GTP cyclohydrolase 1 of Brucella suis (strain ATCC 23445 / NCTC 10510).